We begin with the raw amino-acid sequence, 262 residues long: Probable proteasome subunit beta type-7 (262 aa).

Belongs to the peptidase T1B family. As to quaternary structure, the 26S proteasome consists of a 20S proteasome core and two 19S regulatory subunits. The 20S proteasome core is composed of 28 subunits that are arranged in four stacked rings, resulting in a barrel-shaped structure. The two end rings are each formed by seven alpha subunits, and the two central rings are each formed by seven beta subunits. The catalytic chamber with the active sites is on the inside of the barrel.

Its subcellular location is the cytoplasm. The protein localises to the nucleus. In terms of biological role, non-catalytic component of the proteasome, a multicatalytic proteinase complex which is characterized by its ability to cleave peptides with Arg, Phe, Tyr, Leu, and Glu adjacent to the leaving group at neutral or slightly basic pH. The proteasome has an ATP-dependent proteolytic activity. The protein is Probable proteasome subunit beta type-7 of Schizosaccharomyces pombe (strain 972 / ATCC 24843) (Fission yeast).